The sequence spans 297 residues: Urease accessory protein UreD (297 aa).

The protein belongs to the UreD family. UreD, UreF and UreG form a complex that acts as a GTP-hydrolysis-dependent molecular chaperone, activating the urease apoprotein by helping to assemble the nickel containing metallocenter of UreC. The UreE protein probably delivers the nickel.

The protein resides in the cytoplasm. Functionally, required for maturation of urease via the functional incorporation of the urease nickel metallocenter. The polypeptide is Urease accessory protein UreD (Anaeromyxobacter sp. (strain Fw109-5)).